A 230-amino-acid chain; its full sequence is Nucleoside diphosphate kinase 2, chloroplastic (230 aa).

Residues 1 to 64 (MEAMAVFSGS…SYPKTFRTRS (64 aa)) constitute a chloroplast transit peptide. The ATP site is built by lysine 90, phenylalanine 138, arginine 166, threonine 172, arginine 183, and asparagine 193. The active-site Pros-phosphohistidine intermediate is histidine 196.

It belongs to the NDK family. Mg(2+) is required as a cofactor.

The protein localises to the plastid. It localises to the chloroplast. It catalyses the reaction a 2'-deoxyribonucleoside 5'-diphosphate + ATP = a 2'-deoxyribonucleoside 5'-triphosphate + ADP. The catalysed reaction is a ribonucleoside 5'-diphosphate + ATP = a ribonucleoside 5'-triphosphate + ADP. Major role in the synthesis of nucleoside triphosphates other than ATP. The ATP gamma phosphate is transferred to the NDP beta phosphate via a ping-pong mechanism, using a phosphorylated active-site intermediate. This is Nucleoside diphosphate kinase 2, chloroplastic (NDPK2) from Pisum sativum (Garden pea).